A 463-amino-acid polypeptide reads, in one-letter code: Thiamine-repressible acid phosphatase SPBC21H7.03c (463 aa).

Residues 1–18 (MQLCIISLWFLAAFIVNA) form the signal peptide. Histidine 69 functions as the Nucleophile in the catalytic mechanism. N-linked (GlcNAc...) asparagine glycosylation is found at asparagine 98, asparagine 104, asparagine 221, and asparagine 324. The active-site Proton donor is aspartate 341. N-linked (GlcNAc...) asparagine glycosylation is found at asparagine 439 and asparagine 458.

The protein belongs to the histidine acid phosphatase family.

The protein localises to the secreted. It is found in the cell wall. It catalyses the reaction a phosphate monoester + H2O = an alcohol + phosphate. In terms of biological role, may dephosphorylate thiamine phosphates. In Schizosaccharomyces pombe (strain 972 / ATCC 24843) (Fission yeast), this protein is Thiamine-repressible acid phosphatase SPBC21H7.03c.